Here is a 275-residue protein sequence, read N- to C-terminus: Penicillin-insensitive murein endopeptidase (275 aa).

An N-terminal signal peptide occupies residues 1 to 19 (MKKWIAGLLALIAISPVMA). Cystine bridges form between cysteine 44–cysteine 264, cysteine 187–cysteine 235, and cysteine 216–cysteine 223. Positions 110, 113, 120, 147, and 211 each coordinate Zn(2+). The disordered stretch occupies residues 234–262 (GCGAELESWFQPHQPSAKPGKTLPPPLPP).

It belongs to the peptidase M74 family. As to quaternary structure, dimer. Zn(2+) serves as cofactor.

The protein resides in the periplasm. Its function is as follows. Murein endopeptidase that cleaves the D-alanyl-meso-2,6-diamino-pimelyl amide bond that connects peptidoglycan strands. Likely plays a role in the removal of murein from the sacculus. This is Penicillin-insensitive murein endopeptidase from Yersinia enterocolitica serotype O:8 / biotype 1B (strain NCTC 13174 / 8081).